The primary structure comprises 282 residues: Release factor glutamine methyltransferase (282 aa).

S-adenosyl-L-methionine contacts are provided by residues 120–124 (GVGSG), D143, and N189. 189–192 (NPPY) serves as a coordination point for substrate.

It belongs to the protein N5-glutamine methyltransferase family. PrmC subfamily.

It catalyses the reaction L-glutaminyl-[peptide chain release factor] + S-adenosyl-L-methionine = N(5)-methyl-L-glutaminyl-[peptide chain release factor] + S-adenosyl-L-homocysteine + H(+). Its function is as follows. Methylates the class 1 translation termination release factors RF1/PrfA and RF2/PrfB on the glutamine residue of the universally conserved GGQ motif. The sequence is that of Release factor glutamine methyltransferase from Dictyoglomus turgidum (strain DSM 6724 / Z-1310).